Consider the following 134-residue polypeptide: UPF0756 membrane protein YeaL (134 aa).

4 consecutive transmembrane segments (helical) span residues 14 to 34 (ALGF…LIIV), 51 to 71 (LTVG…SGTL), 86 to 106 (LVAI…ITLM), and 110 to 130 (PQLV…FRGV).

It belongs to the UPF0756 family.

The protein localises to the cell membrane. This chain is UPF0756 membrane protein YeaL, found in Salmonella typhimurium (strain LT2 / SGSC1412 / ATCC 700720).